Here is a 668-residue protein sequence, read N- to C-terminus: MKHYSIQPANLEFNAEGTPVSRDFDDVYFSNDNGLEETRYVFLGGNQLEARFPEHPHPLFVVAESGFGTGLNFLTLWQAFDQFREAHPQAQLQRLHFISFEKFPLTRADLALAHQHWPELAPWAEQLQAQWPMPLPGCHRLLLDEGRVTLDLWFGDINELISQLDDSLNQKVDAWFLDGFAPAKNPDMWTQNLFNAMARLARPGGTLATFTSAGFVRRGLQEAGFTMQKRKGFGRKREMLCGVMEQTLPLPCSTPWFNRTGSSKREVAIIGGGIASALLSLALLRRGWQVTLYCADEAPALGASGNRQGALYPLLSKHDEALNRFFSNGFTFARRLYDSLPVKFDHDWCGVTQLGWDEKSQHKIAQMLSMDLPEELAVAVEANAVEQITGVTTNCSGITYPQGGWLCPAELTRNVLELAQQQGLQIYYQYQLQDLSRKDDCWLLTFAGDQQATHSVVVLANGHQISRFSQTSSLPVYSVAGQVSHIPTTPELAKLKQVLCYDGYLTPQNPANQHHCIGASYHRGSEETAYSEDNQQQNRQRLIDCFPHAQWAKTVDVSKKEARCGVRCATRDHLPMVGNVPDYEATLVEYASLAEQKDKAVSAPVFDDLFMFAALGSRGLCSAPLCAEILAAQMSDEPIPMDASTLAALNPNRLWVRKLLKGKAVKAG.

Positions 1-245 (MKHYSIQPAN…KREMLCGVME (245 aa)) are tRNA (mnm(5)s(2)U34)-methyltransferase. Residues 270-668 (IGGGIASALL…LLKGKAVKAG (399 aa)) are FAD-dependent cmnm(5)s(2)U34 oxidoreductase.

This sequence in the N-terminal section; belongs to the methyltransferase superfamily. tRNA (mnm(5)s(2)U34)-methyltransferase family. In the C-terminal section; belongs to the DAO family. FAD serves as cofactor.

The protein localises to the cytoplasm. It catalyses the reaction 5-aminomethyl-2-thiouridine(34) in tRNA + S-adenosyl-L-methionine = 5-methylaminomethyl-2-thiouridine(34) in tRNA + S-adenosyl-L-homocysteine + H(+). Catalyzes the last two steps in the biosynthesis of 5-methylaminomethyl-2-thiouridine (mnm(5)s(2)U) at the wobble position (U34) in tRNA. Catalyzes the FAD-dependent demodification of cmnm(5)s(2)U34 to nm(5)s(2)U34, followed by the transfer of a methyl group from S-adenosyl-L-methionine to nm(5)s(2)U34, to form mnm(5)s(2)U34. This chain is tRNA 5-methylaminomethyl-2-thiouridine biosynthesis bifunctional protein MnmC, found in Escherichia coli O157:H7.